A 212-amino-acid chain; its full sequence is Dephospho-CoA kinase (212 aa).

The DPCK domain maps to 6-211 (RLGLTGGIGS…LSCQPLSPNQ (206 aa)). ATP is bound at residue 14–19 (GSGKST).

It belongs to the CoaE family.

The protein localises to the cytoplasm. The catalysed reaction is 3'-dephospho-CoA + ATP = ADP + CoA + H(+). The protein operates within cofactor biosynthesis; coenzyme A biosynthesis; CoA from (R)-pantothenate: step 5/5. Its function is as follows. Catalyzes the phosphorylation of the 3'-hydroxyl group of dephosphocoenzyme A to form coenzyme A. The sequence is that of Dephospho-CoA kinase from Albidiferax ferrireducens (strain ATCC BAA-621 / DSM 15236 / T118) (Rhodoferax ferrireducens).